The following is a 354-amino-acid chain: MAILNLDLGERSYPIYIDSGLINKTDLLSSHIRAKRVCIVTNDIVAPLYLDSLKAKLTDFEVDEVILPDGEAEKNLANFEVIISHLLTLEHGRDTTLIALGGGVIGDITGFAAACYQRGIDFIQIPTSLLSQVDSSVGGKTAVNHPLGKNMVGAFYQPKAVFIDIDSLTTLPIREFNAGMAEVIKYGILGDKEFFLWLEDNISAIKAGEKQVLAQMIEKCCQCKADIVASDEKESGVRALLNLGHTFGHAIEAEQGYGKWLHGEAVATGMVLAAKLALAMNLLEVSEFRRIEKLISAFDLPITAPKNMGFAEFIRHMRRDKKNIAGKLRFIIPTAIGQSEIRDDVTQDTLQEIL.

NAD(+) is bound by residues 69–74 (DGEAEK), 103–107 (GVIGD), 127–128 (TS), K140, and K149. Positions 182, 245, and 262 each coordinate Zn(2+).

It belongs to the sugar phosphate cyclases superfamily. Dehydroquinate synthase family. Requires Co(2+) as cofactor. Zn(2+) serves as cofactor. It depends on NAD(+) as a cofactor.

Its subcellular location is the cytoplasm. It carries out the reaction 7-phospho-2-dehydro-3-deoxy-D-arabino-heptonate = 3-dehydroquinate + phosphate. The protein operates within metabolic intermediate biosynthesis; chorismate biosynthesis; chorismate from D-erythrose 4-phosphate and phosphoenolpyruvate: step 2/7. Its function is as follows. Catalyzes the conversion of 3-deoxy-D-arabino-heptulosonate 7-phosphate (DAHP) to dehydroquinate (DHQ). The polypeptide is 3-dehydroquinate synthase (Colwellia psychrerythraea (strain 34H / ATCC BAA-681) (Vibrio psychroerythus)).